A 248-amino-acid chain; its full sequence is 14-3-3 protein zeta (248 aa).

It belongs to the 14-3-3 family. Homodimer.

It localises to the cytoplasm. Its function is as follows. Adapter protein implicated in the regulation of a large spectrum of both general and specialized signaling pathways. Binds to a large number of partners, usually by recognition of a phosphoserine or phosphothreonine motif. Binding generally results in the modulation of the activity of the binding partner. The polypeptide is 14-3-3 protein zeta (14-3-3zeta) (Aedes aegypti (Yellowfever mosquito)).